Consider the following 202-residue polypeptide: Regulator of G-protein signaling 16 (202 aa).

2 S-palmitoyl cysteine lipidation sites follow: Cys2 and Cys12. An RGS domain is found at 65–181 (SFDLLLSSKN…LKSPAYRDLA (117 aa)). Position 168 is a phosphotyrosine; by EGFR (Tyr168). Residue Tyr177 is modified to Phosphotyrosine. The segment at 183–202 (QATAASASPSSSSPAEPLHT) is disordered.

Interacts with GNAI1 and GNAQ. Interacts with GNAI3, GNAI3 and GNAO1. Palmitoylated on Cys-2 and/or Cys-12. Post-translationally, phosphorylated. Phosphorylation at Tyr-168 by EGFR enhances GTPase accelerating (GAP) activity toward GNAI1.

It is found in the membrane. Regulates G protein-coupled receptor signaling cascades. Inhibits signal transduction by increasing the GTPase activity of G protein alpha subunits, thereby driving them into their inactive GDP-bound form. Plays an important role in the phototransduction cascade by regulating the lifetime and effective concentration of activated transducin alpha. May regulate extra and intracellular mitogenic signals. The polypeptide is Regulator of G-protein signaling 16 (RGS16) (Bos taurus (Bovine)).